A 327-amino-acid polypeptide reads, in one-letter code: MVMINFQHIDGEALLAQLQPLLGNIRGKLTPNVEMRKVTWFRTGGLAELFYQPVDEEDLALFLHNLPECVPVTIVGIGSNLLVRDGGVPGVVIRLSPKNFGQVQQVSSKGFLVGAGTADKHLAAAALKAEIAGFHFYHGIPGGLGGALKMNAGANGVETAARVVEVYALDRKGQRHILSLKDMHYSYRHCDIPEDFIFTAALLEGEPGNKDAIRAAMDEVALHRETVQPIREKTGGSTFKNPKDTSAWRVIDEAGCRGLQIGGAQMSEMHCNFMINTGQATGYDLEALGETVRARVFAHSAHLLQWEIERIGQFEQGRSVASFDPFH.

The 182-residue stretch at 42-223 folds into the FAD-binding PCMH-type domain; that stretch reads RTGGLAELFY…RAAMDEVALH (182 aa). Residue Arg-188 is part of the active site. Ser-237 (proton donor) is an active-site residue. The active site involves Glu-307.

Belongs to the MurB family. FAD serves as cofactor.

The protein resides in the cytoplasm. The catalysed reaction is UDP-N-acetyl-alpha-D-muramate + NADP(+) = UDP-N-acetyl-3-O-(1-carboxyvinyl)-alpha-D-glucosamine + NADPH + H(+). It functions in the pathway cell wall biogenesis; peptidoglycan biosynthesis. Its function is as follows. Cell wall formation. This is UDP-N-acetylenolpyruvoylglucosamine reductase from Bartonella tribocorum (strain CIP 105476 / IBS 506).